A 496-amino-acid chain; its full sequence is Probable cytosol aminopeptidase (496 aa).

K251 and D256 together coordinate Mn(2+). K263 is an active-site residue. Positions 274, 333, and 335 each coordinate Mn(2+). R337 is an active-site residue.

Belongs to the peptidase M17 family. It depends on Mn(2+) as a cofactor.

It is found in the cytoplasm. The catalysed reaction is Release of an N-terminal amino acid, Xaa-|-Yaa-, in which Xaa is preferably Leu, but may be other amino acids including Pro although not Arg or Lys, and Yaa may be Pro. Amino acid amides and methyl esters are also readily hydrolyzed, but rates on arylamides are exceedingly low.. The enzyme catalyses Release of an N-terminal amino acid, preferentially leucine, but not glutamic or aspartic acids.. Presumably involved in the processing and regular turnover of intracellular proteins. Catalyzes the removal of unsubstituted N-terminal amino acids from various peptides. The sequence is that of Probable cytosol aminopeptidase from Acidovorax sp. (strain JS42).